Consider the following 507-residue polypeptide: Cystathionine beta-synthase (507 aa).

Lys-53 is subject to N6-(pyridoxal phosphate)lysine. Asn-84 is a pyridoxal 5'-phosphate binding site. The residue at position 134 (Ser-134) is a Phosphoserine. Pyridoxal 5'-phosphate-binding positions include 196-200 (GTGGT) and Ser-289. 2 positions are modified to phosphoserine: Ser-350 and Ser-424. Residues 373–432 (HLKPVVSVKETAKVTDVIKILKDNGFDQLPVLTEDGKLSGLVTLSELLRKLSINNSNNDN) form the CBS domain.

It belongs to the cysteine synthase/cystathionine beta-synthase family. It depends on pyridoxal 5'-phosphate as a cofactor.

The enzyme catalyses L-homocysteine + L-serine = L,L-cystathionine + H2O. It participates in amino-acid biosynthesis; L-cysteine biosynthesis; L-cysteine from L-homocysteine and L-serine: step 1/2. The polypeptide is Cystathionine beta-synthase (CYS4) (Saccharomyces cerevisiae (strain ATCC 204508 / S288c) (Baker's yeast)).